A 274-amino-acid polypeptide reads, in one-letter code: NAD(P)H dehydrogenase [quinone] 1 (274 aa).

FAD contacts are provided by residues His-12, 18 to 19 (FN), and Gln-67. Ser-82 bears the Phosphoserine mark. 104–107 (LQWF) serves as a coordination point for FAD. 126–128 (AYT) is a substrate binding site. Residues 148 to 151 (TTGG), Tyr-156, and Arg-201 contribute to the FAD site. The interval 225 to 274 (PSSLFDLNFQAGFLMKKEVQDEEKNKKFGLSVGHHLGKSIPTDNQIKARK) is important for apoenzyme conformational stability. Residues Lys-250 and Lys-251 each participate in a glycyl lysine isopeptide (Lys-Gly) (interchain with G-Cter in SUMO2) cross-link.

It belongs to the NAD(P)H dehydrogenase (quinone) family. In terms of assembly, homodimer. Interacts with PDLIM4 isoform 2; this interaction stabilizes PDLIM4 isoform 2 in response to oxidative stress and protects it from ubiquitin-independent degradation by the core 20S proteasome. Interacts with TP73 (via SAM domain); this interaction is NADH-dependent, stabilizes TP73 in response to oxidative stress and protects it from ubiquitin-independent degradation by the 20S proteasome. Interacts with TP53; this interaction is NADH-dependent, stabilizes TP53 in response to oxidative stress and protects it from ubiquitin-independent degradation by the 20S proteasome. It depends on FAD as a cofactor.

Its subcellular location is the cytoplasm. The protein localises to the cytosol. The enzyme catalyses a quinone + NADH + H(+) = a quinol + NAD(+). The catalysed reaction is a quinone + NADPH + H(+) = a quinol + NADP(+). It catalyses the reaction ubiquinone-10 + NADH + H(+) = ubiquinol-10 + NAD(+). It carries out the reaction menadione + NADH + H(+) = menadiol + NAD(+). Functionally, flavin-containing quinone reductase that catalyzes two-electron reduction of quinones to hydroquinones using either NADH or NADPH as electron donors. In a ping-pong kinetic mechanism, the electrons are sequentially transferred from NAD(P)H to flavin cofactor and then from reduced flavin to the quinone, bypassing the formation of semiquinone and reactive oxygen species. Regulates cellular redox state primarily through quinone detoxification. Reduces components of plasma membrane redox system such as coenzyme Q and vitamin quinones, producing antioxidant hydroquinone forms. In the process may function as superoxide scavenger to prevent hydroquinone oxidation and facilitate excretion. Alternatively, can activate quinones and their derivatives by generating redox reactive hydroquinones with DNA cross-linking antitumor potential. Acts as a gatekeeper of the core 20S proteasome known to degrade proteins with unstructured regions. Upon oxidative stress, interacts with tumor suppressors TP53 and TP73 in a NADH-dependent way and inhibits their ubiquitin-independent degradation by the 20S proteasome. The sequence is that of NAD(P)H dehydrogenase [quinone] 1 (NQO1) from Pongo abelii (Sumatran orangutan).